Reading from the N-terminus, the 21-residue chain is QHLADYDEVDDDRAKLHLDAR.

Pyrrolidone carboxylic acid is present on glutamine 1. Residue tyrosine 6 is modified to Sulfotyrosine.

Heterohexamer; disulfide linked. Contains 2 sets of 3 non-identical chains (alpha, beta and gamma). The 2 heterotrimers are in head to head conformation with the N-termini in a small central domain. In terms of processing, conversion of fibrinogen to fibrin is triggered by thrombin, which cleaves fibrinopeptides A and B from alpha and beta chains, and thus exposes the N-terminal polymerization sites responsible for the formation of the soft clot.

It localises to the secreted. Cleaved by the protease thrombin to yield monomers which, together with fibrinogen alpha (FGA) and fibrinogen gamma (FGG), polymerize to form an insoluble fibrin matrix. Fibrin has a major function in hemostasis as one of the primary components of blood clots. In addition, functions during the early stages of wound repair to stabilize the lesion and guide cell migration during re-epithelialization. Was originally thought to be essential for platelet aggregation, based on in vitro studies using anticoagulated blood. However subsequent studies have shown that it is not absolutely required for thrombus formation in vivo. Enhances expression of SELP in activated platelets. Maternal fibrinogen is essential for successful pregnancy. Fibrin deposition is also associated with infection, where it protects against IFNG-mediated hemorrhage. May also facilitate the antibacterial immune response via both innate and T-cell mediated pathways. The polypeptide is Fibrinogen beta chain (FGB) (Odocoileus hemionus (Mule deer)).